Here is a 1052-residue protein sequence, read N- to C-terminus: Carbamoyl phosphate synthase large chain (1052 aa).

The interval 1-399 (MRENVKRVLV…ALQKAVRMLD (399 aa)) is carboxyphosphate synthetic domain. Residues arginine 127, arginine 167, glycine 173, glycine 174, lysine 206, leucine 208, glutamate 213, glycine 239, valine 240, histidine 241, glutamine 282, and glutamate 296 each contribute to the ATP site. The region spanning 131–325 (RETMINVNLP…LAYVSAKLAL (195 aa)) is the ATP-grasp 1 domain. Positions 282, 296, and 298 each coordinate Mg(2+). Positions 282, 296, and 298 each coordinate Mn(2+). Residues 400–548 (LGEPGIIGGK…VTYNGTEDDI (149 aa)) form an oligomerization domain region. Positions 549–930 (EFSNGIRKLL…LKSWLSSSPN (382 aa)) are carbamoyl phosphate synthetic domain. Residues 674 to 864 (SRLLDKLGIK…IIDLALTGVI (191 aa)) form the ATP-grasp 2 domain. Positions 710, 749, 751, 756, 780, 781, 782, 783, 823, and 835 each coordinate ATP. Positions 823, 835, and 837 each coordinate Mg(2+). The Mn(2+) site is built by glutamine 823, glutamate 835, and asparagine 837. The MGS-like domain occupies 930 to 1052 (NRLPDQKGIA…YEIGEYGAGI (123 aa)). The interval 931 to 1052 (RLPDQKGIAL…YEIGEYGAGI (122 aa)) is allosteric domain.

Belongs to the CarB family. In terms of assembly, composed of two chains; the small (or glutamine) chain promotes the hydrolysis of glutamine to ammonia, which is used by the large (or ammonia) chain to synthesize carbamoyl phosphate. Tetramer of heterodimers (alpha,beta)4. The cofactor is Mg(2+). It depends on Mn(2+) as a cofactor.

The enzyme catalyses hydrogencarbonate + L-glutamine + 2 ATP + H2O = carbamoyl phosphate + L-glutamate + 2 ADP + phosphate + 2 H(+). The catalysed reaction is hydrogencarbonate + NH4(+) + 2 ATP = carbamoyl phosphate + 2 ADP + phosphate + 2 H(+). It participates in amino-acid biosynthesis; L-arginine biosynthesis; carbamoyl phosphate from bicarbonate: step 1/1. It functions in the pathway pyrimidine metabolism; UMP biosynthesis via de novo pathway; (S)-dihydroorotate from bicarbonate: step 1/3. Large subunit of the glutamine-dependent carbamoyl phosphate synthetase (CPSase). CPSase catalyzes the formation of carbamoyl phosphate from the ammonia moiety of glutamine, carbonate, and phosphate donated by ATP, constituting the first step of 2 biosynthetic pathways, one leading to arginine and/or urea and the other to pyrimidine nucleotides. The large subunit (synthetase) binds the substrates ammonia (free or transferred from glutamine from the small subunit), hydrogencarbonate and ATP and carries out an ATP-coupled ligase reaction, activating hydrogencarbonate by forming carboxy phosphate which reacts with ammonia to form carbamoyl phosphate. The sequence is that of Carbamoyl phosphate synthase large chain from Sulfolobus acidocaldarius (strain ATCC 33909 / DSM 639 / JCM 8929 / NBRC 15157 / NCIMB 11770).